We begin with the raw amino-acid sequence, 345 residues long: Fe(3+) ions import ATP-binding protein FbpC (345 aa).

Residues 3–233 (LSLKAATVRF…PADEFVARFL (231 aa)) form the ABC transporter domain. 35–42 (GPSGSGKS) contributes to the ATP binding site.

It belongs to the ABC transporter superfamily. Fe(3+) ion importer (TC 3.A.1.10) family. The complex is composed of two ATP-binding proteins (FbpC), two transmembrane proteins (FbpB) and a solute-binding protein (FbpA).

The protein localises to the cell membrane. It carries out the reaction Fe(3+)(out) + ATP + H2O = Fe(3+)(in) + ADP + phosphate + H(+). Functionally, part of the ABC transporter complex FbpABC involved in Fe(3+) ions import. Responsible for energy coupling to the transport system. The polypeptide is Fe(3+) ions import ATP-binding protein FbpC (Streptomyces avermitilis (strain ATCC 31267 / DSM 46492 / JCM 5070 / NBRC 14893 / NCIMB 12804 / NRRL 8165 / MA-4680)).